We begin with the raw amino-acid sequence, 376 residues long: Putative F-box protein At2g33200 (376 aa).

Residues 6-53 (YDWSKLCHDILRLILESLHYKDYHRARTVCSNWYTASTTCKRPLYPWR) enclose the F-box domain.

This is Putative F-box protein At2g33200 from Arabidopsis thaliana (Mouse-ear cress).